A 483-amino-acid chain; its full sequence is Glutamyl-tRNA(Gln) amidotransferase subunit A (483 aa).

Catalysis depends on charge relay system residues Lys77 and Ser152. Catalysis depends on Ser176, which acts as the Acyl-ester intermediate.

The protein belongs to the amidase family. GatA subfamily. As to quaternary structure, heterotrimer of A, B and C subunits.

It carries out the reaction L-glutamyl-tRNA(Gln) + L-glutamine + ATP + H2O = L-glutaminyl-tRNA(Gln) + L-glutamate + ADP + phosphate + H(+). Allows the formation of correctly charged Gln-tRNA(Gln) through the transamidation of misacylated Glu-tRNA(Gln) in organisms which lack glutaminyl-tRNA synthetase. The reaction takes place in the presence of glutamine and ATP through an activated gamma-phospho-Glu-tRNA(Gln). The protein is Glutamyl-tRNA(Gln) amidotransferase subunit A of Listeria monocytogenes serotype 4b (strain F2365).